Consider the following 460-residue polypeptide: tRNA(Ile)-lysidine synthase (460 aa).

Residue 30–35 coordinates ATP; sequence SGGLDS.

This sequence belongs to the tRNA(Ile)-lysidine synthase family.

The protein resides in the cytoplasm. The catalysed reaction is cytidine(34) in tRNA(Ile2) + L-lysine + ATP = lysidine(34) in tRNA(Ile2) + AMP + diphosphate + H(+). Functionally, ligates lysine onto the cytidine present at position 34 of the AUA codon-specific tRNA(Ile) that contains the anticodon CAU, in an ATP-dependent manner. Cytidine is converted to lysidine, thus changing the amino acid specificity of the tRNA from methionine to isoleucine. In Yersinia pestis, this protein is tRNA(Ile)-lysidine synthase.